A 221-amino-acid chain; its full sequence is Germin-like protein 5-1 (221 aa).

Positions 1 to 25 (MARPSLPCAVVAVLLLALLPTPSTA) are cleaved as a signal peptide. A disulfide bridge connects residues cysteine 35 and cysteine 50. The Cupin type-1 domain maps to 62–210 (KGLAAAGNTN…AFQVGTKEVE (149 aa)). N-linked (GlcNAc...) asparagine glycosylation is present at asparagine 71. 4 residues coordinate Mn(2+): histidine 110, histidine 112, glutamate 117, and histidine 156.

It belongs to the germin family. As to quaternary structure, oligomer (believed to be a pentamer but probably hexamer).

Its subcellular location is the secreted. The protein resides in the extracellular space. It is found in the apoplast. Its function is as follows. May play a role in plant defense. Probably has no oxalate oxidase activity even if the active site is conserved. This chain is Germin-like protein 5-1, found in Oryza sativa subsp. japonica (Rice).